Here is a 544-residue protein sequence, read N- to C-terminus: Chaperonin GroEL (544 aa).

ATP-binding positions include 30–33 (TLGP), Lys-51, 87–91 (DGTTT), Gly-415, 481–483 (DAL), and Asp-497.

It belongs to the chaperonin (HSP60) family. As to quaternary structure, forms a cylinder of 14 subunits composed of two heptameric rings stacked back-to-back. Interacts with the co-chaperonin GroES.

Its subcellular location is the cytoplasm. The catalysed reaction is ATP + H2O + a folded polypeptide = ADP + phosphate + an unfolded polypeptide.. Its function is as follows. Together with its co-chaperonin GroES, plays an essential role in assisting protein folding. The GroEL-GroES system forms a nano-cage that allows encapsulation of the non-native substrate proteins and provides a physical environment optimized to promote and accelerate protein folding. The polypeptide is Chaperonin GroEL (Chlamydia trachomatis serovar A (strain ATCC VR-571B / DSM 19440 / HAR-13)).